The following is a 372-amino-acid chain: Lectin/endochitinase 1 (372 aa).

An N-terminal signal peptide occupies residues 1 to 23; sequence MMMRFLSAVVIMSSAMAVGLVSA. Residue Gln24 participates in substrate binding. Residue Gln24 is modified to Pyrrolidone carboxylic acid. 2 consecutive Chitin-binding type-1 domains span residues 24-64 and 69-111; these read QRCG…KCWS and DHRC…RCSS. 4 disulfide bridges follow: Cys26/Cys41, Cys35/Cys47, Cys40/Cys54, and Cys58/Cys62. Position 42–53 (42–53) interacts with substrate; it reads SIWGWCGDSEPY. His70 contributes to the Zn(2+) binding site. 4 cysteine pairs are disulfide-bonded: Cys72–Cys87, Cys81–Cys93, Cys86–Cys100, and Cys105–Cys109. Residue His90 coordinates Zn(2+). The segment at 113–128 is spacer; that stretch reads VRGPRVALSGNSTANS. N-linked (GlcNAc...) asparagine glycosylation is present at Asn123. A chitinase region spans residues 129 to 372; that stretch reads IGNVVVTEPL…FQRIQMRVAA (244 aa).

Monomer and homodimer. Zinc favors dimerization. Active in the monomeric form but probably inactive in the dimeric form. The interaction with glycans on the mammalian TCR and MHC molecules of the T-cell and antigen-presenting cell, respectively, is inhibited by oligomers of GlcNAc. Proteolytically processed to yield a very small protein (8.5 kDa, 86 AA) containing only the two chitin-binding domains. In terms of tissue distribution, rhizomes and inflorescence with immature seeds.

The catalysed reaction is Random endo-hydrolysis of N-acetyl-beta-D-glucosaminide (1-&gt;4)-beta-linkages in chitin and chitodextrins.. Functions both as a chitinase and as a N-acetyl-D-glucosamine binding lectin. Inhibits the growth of several phytopathogenic chitin-containing fungi. Also possesses insecticidal activity and superantigenic properties. This Urtica dioica (Great nettle) protein is Lectin/endochitinase 1 (UDA1).